Reading from the N-terminus, the 29-residue chain is Cytochrome b6-f complex subunit 8 (29 aa).

A helical transmembrane segment spans residues 3–23 (IISIGWVSLMVVFTFSISLVV).

This sequence belongs to the PetN family. As to quaternary structure, the 4 large subunits of the cytochrome b6-f complex are cytochrome b6, subunit IV (17 kDa polypeptide, PetD), cytochrome f and the Rieske protein, while the 4 small subunits are PetG, PetL, PetM and PetN. The complex functions as a dimer.

It is found in the plastid. It localises to the chloroplast thylakoid membrane. In terms of biological role, component of the cytochrome b6-f complex, which mediates electron transfer between photosystem II (PSII) and photosystem I (PSI), cyclic electron flow around PSI, and state transitions. The protein is Cytochrome b6-f complex subunit 8 of Staurastrum punctulatum (Green alga).